Here is a 357-residue protein sequence, read N- to C-terminus: Glucose-6-phosphatase catalytic subunit 1 (357 aa).

The Lumenal portion of the chain corresponds to 1–28 (MEEGMNILHDFGIQSTRYLQVNYQDSQD). A helical membrane pass occupies residues 29 to 49 (WFILVSVIADLRNAFYVLFPI). The Cytoplasmic segment spans residues 50-60 (WFHLKETVGIN). A helical transmembrane segment spans residues 61–81 (LLWVAVVGDWFNLVFKWILFG). Topologically, residues 82–117 (QRPYWWVLDTDYYSNSSVPIIKQFPVTCETGPGSPS) are lumenal. Arginine 83 lines the substrate pocket. Asparagine 96 carries an N-linked (GlcNAc...) asparagine glycan. Residues 118 to 138 (GHAMGAAGVYYVMVTSTLAIF) traverse the membrane as a helical segment. The active-site Proton donor is histidine 119. The Cytoplasmic portion of the chain corresponds to 139 to 147 (RGKKKPTYG). The helical transmembrane segment at 148–168 (FRCLNVILWLGFWAVQLNVCL) threads the bilayer. The Lumenal segment spans residues 169–179 (SRIYLAAHFPH). Residue arginine 170 coordinates substrate. Histidine 176 serves as the catalytic Nucleophile. Residues 180 to 202 (QVVAGVLSGIAVAETFSHIRGIY) traverse the membrane as a helical segment. Residues 203 to 211 (NASLRKYCL) are Cytoplasmic-facing. A helical membrane pass occupies residues 212–232 (ITIFLFGFALGFYLLLKGLGV). Residues 233–254 (DLLWTLEKAKRWCERPEWVHLD) are Lumenal-facing. The helical transmembrane segment at 255 to 275 (TTPFASLFKNLGTLLGLGLAL) threads the bilayer. The Cytoplasmic portion of the chain corresponds to 276–291 (NSSMYRKSCKGELSKL). Residues 292 to 312 (LPFRFACIVASLVLLHLFDSL) form a helical membrane-spanning segment. The Lumenal segment spans residues 313 to 320 (KPPSQVEL). Residues 321 to 341 (IFYILSFCKSATVPFASVSLI) traverse the membrane as a helical segment. The Cytoplasmic segment spans residues 342–357 (PYCLARILGQTHKKSL). The Prevents secretion from ER signature appears at 354 to 357 (KKSL).

This sequence belongs to the glucose-6-phosphatase family. In terms of tissue distribution, liver and kidney.

It is found in the endoplasmic reticulum membrane. It catalyses the reaction D-glucose 6-phosphate + H2O = D-glucose + phosphate. The protein operates within carbohydrate biosynthesis; gluconeogenesis. Functionally, hydrolyzes glucose-6-phosphate to glucose in the endoplasmic reticulum. Forms with the glucose-6-phosphate transporter (SLC37A4/G6PT) the complex responsible for glucose production in the terminal step of glycogenolysis and gluconeogenesis. Hence, it is the key enzyme in homeostatic regulation of blood glucose levels. In Mus musculus (Mouse), this protein is Glucose-6-phosphatase catalytic subunit 1 (G6pc1).